The primary structure comprises 400 residues: Phosphoglycerate kinase (400 aa).

Substrate contacts are provided by residues 24 to 26, Arg39, 62 to 65, Arg121, and Arg154; these read DFN and HFGR. ATP contacts are provided by residues Lys205, Gly296, Glu327, and 356-359; that span reads GGDS.

This sequence belongs to the phosphoglycerate kinase family. In terms of assembly, monomer.

Its subcellular location is the cytoplasm. The enzyme catalyses (2R)-3-phosphoglycerate + ATP = (2R)-3-phospho-glyceroyl phosphate + ADP. It participates in carbohydrate degradation; glycolysis; pyruvate from D-glyceraldehyde 3-phosphate: step 2/5. This Rippkaea orientalis (strain PCC 8801 / RF-1) (Cyanothece sp. (strain PCC 8801)) protein is Phosphoglycerate kinase.